The sequence spans 341 residues: Methionine import ATP-binding protein MetN (341 aa).

Positions Ile-2–Val-241 constitute an ABC transporter domain. Gly-38–Ser-45 is a binding site for ATP.

It belongs to the ABC transporter superfamily. Methionine importer (TC 3.A.1.24) family. As to quaternary structure, the complex is composed of two ATP-binding proteins (MetN), two transmembrane proteins (MetP) and a solute-binding protein (MetQ).

It is found in the cell membrane. The catalysed reaction is L-methionine(out) + ATP + H2O = L-methionine(in) + ADP + phosphate + H(+). It carries out the reaction D-methionine(out) + ATP + H2O = D-methionine(in) + ADP + phosphate + H(+). Functionally, part of the ABC transporter complex MetNPQ involved in methionine import. Responsible for energy coupling to the transport system. It has also been shown to be involved in methionine sulfoxide transport. The protein is Methionine import ATP-binding protein MetN of Bacillus subtilis (strain 168).